Consider the following 130-residue polypeptide: Small ribosomal subunit protein uS8 (130 aa).

This sequence belongs to the universal ribosomal protein uS8 family. In terms of assembly, part of the 30S ribosomal subunit.

One of the primary rRNA binding proteins, it binds directly to 16S rRNA central domain where it helps coordinate assembly of the platform of the 30S subunit. The protein is Small ribosomal subunit protein uS8 of Caldivirga maquilingensis (strain ATCC 700844 / DSM 13496 / JCM 10307 / IC-167).